Reading from the N-terminus, the 491-residue chain is Glucose-6-phosphate exchanger SLC37A2 (491 aa).

A helical transmembrane segment spans residues 5-25 (LAPGIWYRAFILLITFLIYTC). 3 N-linked (GlcNAc...) asparagine glycosylation sites follow: Asn43, Asn52, and Asn58. Helical transmembrane passes span 78 to 98 (GAVD…SGIF), 108 to 130 (LTAG…FWNI), 132 to 154 (VLWY…WPAV), 169 to 189 (LIMG…SLLA), and 200 to 220 (SFVV…FFLI). A disordered region spans residues 229–257 (SPPQHHGNPEESQDQPEDPANGPSCNKES). 6 consecutive transmembrane segments (helical) span residues 292 to 312 (LCLL…PLYI), 328 to 348 (TLFD…SDYI), 352 to 372 (ATTC…YNHV), 377 to 397 (IGIS…PYAL), 424 to 444 (AIID…AGLI), and 452 to 472 (VFYM…RLVY).

It belongs to the major facilitator superfamily. Organophosphate:Pi antiporter (OPA) (TC 2.A.1.4) family.

It is found in the endoplasmic reticulum membrane. It carries out the reaction D-glucose 6-phosphate(in) + phosphate(out) = D-glucose 6-phosphate(out) + phosphate(in). With respect to regulation, inhibited by vanadate but not by chlorogenic acid. Inorganic phosphate and glucose-6-phosphate antiporter. May transport cytoplasmic glucose-6-phosphate into the lumen of the endoplasmic reticulum and translocate inorganic phosphate into the opposite direction. Independent of a lumenal glucose-6-phosphatase. May not play a role in homeostatic regulation of blood glucose levels. The sequence is that of Glucose-6-phosphate exchanger SLC37A2 from Bos taurus (Bovine).